The chain runs to 396 residues: Pyruvate dehydrogenase E1 component subunit alpha type I, mitochondrial (396 aa).

Residues 1 to 25 constitute a mitochondrion transit peptide; sequence MIFVFANIFKVPTVSPSVMAISVRL. Residues His-88, Tyr-114, Arg-115, Gly-153, Gly-161, Val-163, Asp-192, Gly-193, Ala-194, Asn-221, and Tyr-223 each coordinate pyruvate. Thiamine diphosphate-binding residues include Tyr-114 and Arg-115. Residues Gly-161, Val-163, Asp-192, Gly-193, Ala-194, and Asn-221 each coordinate thiamine diphosphate. Residue Asp-192 participates in Mg(2+) binding. Positions 221 and 223 each coordinate Mg(2+). A thiamine diphosphate-binding site is contributed by His-288. Residues Ser-289 and Ser-296 each carry the phosphoserine modification.

In terms of assembly, heterotetramer of two PDHA1 and two PDHB subunits. The heterotetramer interacts with DLAT, and is part of the multimeric pyruvate dehydrogenase complex that contains multiple copies of pyruvate dehydrogenase (E1), dihydrolipoamide acetyltransferase (DLAT, E2) and lipoamide dehydrogenase (DLD, E3). The cofactor is thiamine diphosphate. Mg(2+) is required as a cofactor.

The protein localises to the mitochondrion matrix. It carries out the reaction N(6)-[(R)-lipoyl]-L-lysyl-[protein] + pyruvate + H(+) = N(6)-[(R)-S(8)-acetyldihydrolipoyl]-L-lysyl-[protein] + CO2. Its activity is regulated as follows. Pyruvate dehydrogenase activity is inhibited by phosphorylation of PDHA1; it is reactivated by dephosphorylation. Its function is as follows. The pyruvate dehydrogenase complex catalyzes the overall conversion of pyruvate to acetyl-CoA and CO(2), and thereby links the glycolytic pathway to the tricarboxylic cycle. The chain is Pyruvate dehydrogenase E1 component subunit alpha type I, mitochondrial from Ascaris suum (Pig roundworm).